The primary structure comprises 282 residues: NADPH-dependent 7-cyano-7-deazaguanine reductase (282 aa).

88-90 (IES) serves as a coordination point for substrate. 90–91 (SK) contacts NADPH. Cysteine 190 (thioimide intermediate) is an active-site residue. Aspartate 197 acts as the Proton donor in catalysis. Substrate is bound at residue 229-230 (HE). 258–259 (RG) contributes to the NADPH binding site.

It belongs to the GTP cyclohydrolase I family. QueF type 2 subfamily. In terms of assembly, homodimer.

It is found in the cytoplasm. It carries out the reaction 7-aminomethyl-7-carbaguanine + 2 NADP(+) = 7-cyano-7-deazaguanine + 2 NADPH + 3 H(+). The protein operates within tRNA modification; tRNA-queuosine biosynthesis. Functionally, catalyzes the NADPH-dependent reduction of 7-cyano-7-deazaguanine (preQ0) to 7-aminomethyl-7-deazaguanine (preQ1). This Shigella dysenteriae serotype 1 (strain Sd197) protein is NADPH-dependent 7-cyano-7-deazaguanine reductase.